A 171-amino-acid polypeptide reads, in one-letter code: Large ribosomal subunit protein bL9 (171 aa).

The protein belongs to the bacterial ribosomal protein bL9 family.

Its function is as follows. Binds to the 23S rRNA. The chain is Large ribosomal subunit protein bL9 from Rickettsia conorii (strain ATCC VR-613 / Malish 7).